Here is a 477-residue protein sequence, read N- to C-terminus: C4-dicarboxylate transport protein 1 (477 aa).

The next 8 helical transmembrane spans lie at 21-39, 59-76, 89-111, 162-179, 200-221, 231-253, 342-364, and 368-387; these read PYVQVLVAILLGVAVGHFY, MIIAPVIFLTVSTGIAGM, AMVYFVTFSTLALIVGLIVGNVI, ILQVLFFSVLFGIALAMV, LVGILMKAAPIGAFGAMAFTIG, LAMLVGTFYLTAFLFVFGVLGAV, VLLLLVAMLSSKGAAGVTGAGFV, and ATLSVVPAVPVAGMALILGV. A disordered region spans residues 435–477; sequence SAGQPLITPAPSNSAASLPVESPGWSQTPDDRAAGSKQTLAGR.

It belongs to the dicarboxylate/amino acid:cation symporter (DAACS) (TC 2.A.23) family.

It is found in the cell inner membrane. In terms of biological role, responsible for the transport of dicarboxylates such as succinate, fumarate, and malate from the periplasm across the membrane. This transport system plays an important role in the energy supply of rhizobium-legume symbionts. The sequence is that of C4-dicarboxylate transport protein 1 (dctA1) from Mesorhizobium japonicum (strain LMG 29417 / CECT 9101 / MAFF 303099) (Mesorhizobium loti (strain MAFF 303099)).